A 456-amino-acid chain; its full sequence is Putative sodium-coupled neutral amino acid transporter 11 (456 aa).

The interval 1-25 (MRAGPRRQHLLPPQDNRAAVGYQRQ) is disordered. The chain crosses the membrane as a helical span at residues 58-78 (FNVVNSIIGSGIIDFSLILLI). N94 carries N-linked (GlcNAc...) asparagine glycosylation. 6 helical membrane-spanning segments follow: residues 98-118 (GFPG…IAMI), 143-163 (VFIG…LPLS), 171-191 (LGKV…IVMA), 206-226 (AWVF…FAFI), 252-272 (MSIV…YLTF), and 291-313 (VTFG…CFVT). N-linked (GlcNAc...) asparagine glycosylation occurs at N325. The next 3 helical transmembrane spans lie at 329–349 (VFHI…SLLI), 351–371 (CLGI…IFII), and 390–410 (IMSY…FVMA).

The protein belongs to the amino acid/polyamine transporter 2 family.

It localises to the membrane. Putative sodium-dependent amino acid/proton antiporter. The protein is Putative sodium-coupled neutral amino acid transporter 11 (SLC38A11) of Macaca fascicularis (Crab-eating macaque).